The chain runs to 158 residues: 2-C-methyl-D-erythritol 2,4-cyclodiphosphate synthase (158 aa).

Residues D9 and H11 each contribute to the a divalent metal cation site. 4-CDP-2-C-methyl-D-erythritol 2-phosphate-binding positions include 9-11 and 35-36; these read DVH and HS. H43 serves as a coordination point for a divalent metal cation. Residues 57–59, 62–66, 101–107, 133–136, F140, and R143 each bind 4-CDP-2-C-methyl-D-erythritol 2-phosphate; these read DIG, FPDTD, AQKPKMA, and TTTE.

Belongs to the IspF family. Homotrimer. Requires a divalent metal cation as cofactor.

It catalyses the reaction 4-CDP-2-C-methyl-D-erythritol 2-phosphate = 2-C-methyl-D-erythritol 2,4-cyclic diphosphate + CMP. It functions in the pathway isoprenoid biosynthesis; isopentenyl diphosphate biosynthesis via DXP pathway; isopentenyl diphosphate from 1-deoxy-D-xylulose 5-phosphate: step 4/6. Its function is as follows. Involved in the biosynthesis of isopentenyl diphosphate (IPP) and dimethylallyl diphosphate (DMAPP), two major building blocks of isoprenoid compounds. Catalyzes the conversion of 4-diphosphocytidyl-2-C-methyl-D-erythritol 2-phosphate (CDP-ME2P) to 2-C-methyl-D-erythritol 2,4-cyclodiphosphate (ME-CPP) with a corresponding release of cytidine 5-monophosphate (CMP). This chain is 2-C-methyl-D-erythritol 2,4-cyclodiphosphate synthase, found in Bacillus cereus (strain B4264).